A 328-amino-acid chain; its full sequence is 5,10-methylenetetrahydromethanopterin reductase (328 aa).

It belongs to the mer family.

It is found in the cytoplasm. The catalysed reaction is 5-methyl-5,6,7,8-tetrahydromethanopterin + oxidized coenzyme F420-(gamma-L-Glu)(n) + H(+) = 5,10-methylenetetrahydromethanopterin + reduced coenzyme F420-(gamma-L-Glu)(n). The protein operates within one-carbon metabolism; methanogenesis from CO(2); methyl-coenzyme M from 5,10-methylene-5,6,7,8-tetrahydromethanopterin: step 1/2. Its function is as follows. Catalyzes the reversible reduction of methylene-H(4)MPT to methyl-H(4)MPT. This is 5,10-methylenetetrahydromethanopterin reductase from Methanosarcina barkeri (strain Fusaro / DSM 804).